A 418-amino-acid chain; its full sequence is MMRLYYFLSFLLLPIYFVIIFIRLLIGKEDIRRVKERFAIGKHRQDNRFLIWIHAASVGESMIALNLVDNISKHFPEVRFLVTSWTQSSAKILSTKLPKIATHQLLPIDNIIFTKIFLNNWKPDLGIFIESELWPGTINEAAKQCNLLLVNARMSDKSFESWKKRKGFFQLIVKNFSEVIVQSERDLQKFNELGISNTTNLGNIKFANEKLPVNQEELIKLSEHLKNKQVILFASTHPEDEEIILPIIKNLKKQVIDCYIILIPRHPERIKSILDNCIAQDLSATAKSQNDLPVLTDDLYIVDRFGEMGLFFSIASISFIGGSFKQGGHNILEAAHFSNCIIFGPDMSKNTDIAKGVLQSKAAIQIKSGEELLNMLEYLLDPNNSRELKNYQENSLKFVERNQKILDEYLQIITKFFP.

A helical; Signal-anchor membrane pass occupies residues 7 to 27; it reads FLSFLLLPIYFVIIFIRLLIG. The Proton acceptor role is filled by Glu60. CMP is bound by residues 264–265, 305–307, and 330–333; these read PR, FGE, and NILE.

The protein belongs to the glycosyltransferase group 1 family. Glycosyltransferase 30 subfamily.

It is found in the cell inner membrane. The catalysed reaction is lipid IVA (E. coli) + CMP-3-deoxy-beta-D-manno-octulosonate = alpha-Kdo-(2-&gt;6)-lipid IVA (E. coli) + CMP + H(+). It participates in bacterial outer membrane biogenesis; LPS core biosynthesis. Involved in lipopolysaccharide (LPS) biosynthesis. Catalyzes the transfer of 3-deoxy-D-manno-octulosonate (Kdo) residue(s) from CMP-Kdo to lipid IV(A), the tetraacyldisaccharide-1,4'-bisphosphate precursor of lipid A. This is 3-deoxy-D-manno-octulosonic acid transferase (waaA) from Rickettsia bellii (strain RML369-C).